A 377-amino-acid chain; its full sequence is N-acetyldiaminopimelate deacetylase (377 aa).

Asp-69 is a catalytic residue. Glu-128 serves as the catalytic Proton acceptor.

It belongs to the peptidase M20A family. N-acetyldiaminopimelate deacetylase subfamily.

The enzyme catalyses N-acetyl-(2S,6S)-2,6-diaminopimelate + H2O = (2S,6S)-2,6-diaminopimelate + acetate. Its pathway is amino-acid biosynthesis; L-lysine biosynthesis via DAP pathway; LL-2,6-diaminopimelate from (S)-tetrahydrodipicolinate (acetylase route): step 3/3. Catalyzes the conversion of N-acetyl-diaminopimelate to diaminopimelate and acetate. This chain is N-acetyldiaminopimelate deacetylase, found in Streptococcus sanguinis (strain SK36).